A 34-amino-acid chain; its full sequence is Phalloidin proprotein (34 aa).

The propeptide occupies 1-10 (MSDINTTCLP). Residues 11–17 (AWLATCP) constitute a cross-link (cyclopeptide (Ala-Pro)). The segment at residues 12–16 (WLATC) is a cross-link (2'-cysteinyl-6'-hydroxytryptophan sulfoxide (Trp-Cys)). Residues 18-34 (CTGDDVNPTLTCGESLC) constitute a propeptide that is removed on maturation.

It belongs to the MSDIN fungal toxin family. Post-translationally, processed by the macrocyclase-peptidase enzyme POPB to yield a toxic cyclic heptapeptide. POPB first removes 10 residues from the N-terminus. Conformational trapping of the remaining peptide forces the enzyme to release this intermediate rather than proceed to macrocyclization. The enzyme rebinds the remaining peptide in a different conformation and catalyzes macrocyclization of the N-terminal 7 residues.

Functionally, toxin that belongs to the bicyclic heptapeptides called phallotoxins. Although structurally related to amatoxins, phallotoxins have a different mode of action, which is the stabilization of F-actin. Phallotoxins are poisonous when administered parenterally, but not orally because of poor absorption. This is Phalloidin proprotein from Amanita phalloides (Death cap).